The primary structure comprises 360 residues: Probable neutral protease 2 homolog MCYG_04257 (360 aa).

The first 17 residues, 1–17, serve as a signal peptide directing secretion; that stretch reads MQLIAFLAALGVPVAFA. Residues 18–182 constitute a propeptide that is removed on maturation; it reads ATIPSVPLNH…KVKAGSIDKR (165 aa). Cysteines 190 and 261 form a disulfide. Asn-262 carries N-linked (GlcNAc...) asparagine glycosylation. 2 disulfides stabilise this stretch: Cys-268–Cys-286 and Cys-300–Cys-360. Residue His-311 participates in Zn(2+) binding. Glu-312 is an active-site residue. The Zn(2+) site is built by His-315 and Asp-326.

The protein belongs to the peptidase M35 family. It depends on Zn(2+) as a cofactor.

Its subcellular location is the secreted. The enzyme catalyses Preferential cleavage of bonds with hydrophobic residues in P1'. Also 3-Asn-|-Gln-4 and 8-Gly-|-Ser-9 bonds in insulin B chain.. Its function is as follows. Probable secreted metalloprotease that shows high activities on basic nuclear substrates such as histone and protamine. May be involved in virulence. This chain is Probable neutral protease 2 homolog MCYG_04257, found in Arthroderma otae (strain ATCC MYA-4605 / CBS 113480) (Microsporum canis).